Reading from the N-terminus, the 604-residue chain is NADP-dependent malic enzyme, mitochondrial (604 aa).

The tract at residues serine 28–glycine 50 is disordered. Tyrosine 137 (proton donor) is an active-site residue. Arginine 190 serves as a coordination point for NADP(+). Lysine 208 (proton acceptor) is an active-site residue. Residues glutamate 280, aspartate 281, and aspartate 304 each coordinate a divalent metal cation. Position 304 (aspartate 304) interacts with NADP(+). Serine 371 carries the phosphoserine modification. Asparagine 443 contributes to the NADP(+) binding site.

It belongs to the malic enzymes family. It depends on Mg(2+) as a cofactor. Mn(2+) is required as a cofactor.

It is found in the mitochondrion matrix. It carries out the reaction (S)-malate + NADP(+) = pyruvate + CO2 + NADPH. It catalyses the reaction oxaloacetate + H(+) = pyruvate + CO2. The protein is NADP-dependent malic enzyme, mitochondrial (Me3) of Mus musculus (Mouse).